We begin with the raw amino-acid sequence, 570 residues long: Urease subunit alpha 1 (570 aa).

Positions 131 to 570 constitute a Urease domain; the sequence is GGIDTHVHFI…VPMAQRYFLF (440 aa). Ni(2+) is bound by residues His-136, His-138, and Lys-219. An N6-carboxylysine modification is found at Lys-219. His-221 is a substrate binding site. The Ni(2+) site is built by His-248 and His-274. The active-site Proton donor is the His-322. Asp-362 is a binding site for Ni(2+).

Belongs to the metallo-dependent hydrolases superfamily. Urease alpha subunit family. Heterotrimer of UreA (gamma), UreB (beta) and UreC (alpha) subunits. Three heterotrimers associate to form the active enzyme. Ni cation is required as a cofactor. In terms of processing, carboxylation allows a single lysine to coordinate two nickel ions.

It is found in the cytoplasm. It carries out the reaction urea + 2 H2O + H(+) = hydrogencarbonate + 2 NH4(+). It functions in the pathway nitrogen metabolism; urea degradation; CO(2) and NH(3) from urea (urease route): step 1/1. This Brucella melitensis biotype 1 (strain ATCC 23456 / CCUG 17765 / NCTC 10094 / 16M) protein is Urease subunit alpha 1.